The sequence spans 92 residues: Small ribosomal subunit protein uS19c (92 aa).

Positions 73–92 are disordered; it reads EFSPTRTYRGHAKKDKKAKR. The span at 80 to 92 shows a compositional bias: basic residues; that stretch reads YRGHAKKDKKAKR.

It belongs to the universal ribosomal protein uS19 family.

It localises to the plastid. The protein resides in the chloroplast. In terms of biological role, protein S19 forms a complex with S13 that binds strongly to the 16S ribosomal RNA. The protein is Small ribosomal subunit protein uS19c (rps19) of Chlamydomonas reinhardtii (Chlamydomonas smithii).